Here is a 592-residue protein sequence, read N- to C-terminus: Zinc metalloproteinase dpy-31 (592 aa).

An N-terminal signal peptide occupies residues 1–18 (MHKIFIIFGLLSLCAAHS). Positions 19–127 (LRDLSNKDEE…TEGKTRVKRK (109 aa)) are excised as a propeptide. The disordered stretch occupies residues 22–46 (LSNKDEEDPPSSAPGVRKRRMMSEE). The Peptidase M12A domain maps to 127–326 (KFIGSNLRRW…IRLMNKIYCS (200 aa)). N-linked (GlcNAc...) asparagine glycosylation occurs at Asn167. 2 disulfide bridges follow: Cys170–Cys325 and Cys193–Cys214. His222 is a binding site for Zn(2+). The active site involves Glu223. Positions 226 and 232 each coordinate Zn(2+). The EGF-like domain occupies 349-361 (CRCPDGFTGQYCE). The cysteines at positions 371 and 399 are disulfide-linked. A CUB domain is found at 371–487 (CGGKISLTRS…KGFEARARAV (117 aa)). N-linked (GlcNAc...) asparagine glycosylation occurs at Asn438. The TSP type-1 domain maps to 490–540 (AGNWNSWSPWTACSATCGACGSRMRTRTCPPGNACSGEPVETQICNTQACT). 3 disulfides stabilise this stretch: Cys502–Cys534, Cys506–Cys539, and Cys518–Cys524.

Requires Zn(2+) as cofactor. As to expression, expressed in hypodermis, rectal and vulval epithelial cells and amphid socket cells.

The protein resides in the secreted. Functionally, metalloprotease which cleaves the carboxyl terminus of procollagens, such as sqt-3, to mature collagens. Involved in cuticular collagen maturation. The sequence is that of Zinc metalloproteinase dpy-31 from Caenorhabditis elegans.